A 199-amino-acid polypeptide reads, in one-letter code: Imidazoleglycerol-phosphate dehydratase (199 aa).

This sequence belongs to the imidazoleglycerol-phosphate dehydratase family.

It is found in the cytoplasm. It catalyses the reaction D-erythro-1-(imidazol-4-yl)glycerol 3-phosphate = 3-(imidazol-4-yl)-2-oxopropyl phosphate + H2O. The protein operates within amino-acid biosynthesis; L-histidine biosynthesis; L-histidine from 5-phospho-alpha-D-ribose 1-diphosphate: step 6/9. The chain is Imidazoleglycerol-phosphate dehydratase from Roseiflexus sp. (strain RS-1).